A 261-amino-acid polypeptide reads, in one-letter code: Arcelin-5B (261 aa).

A signal peptide spans 1-21 (MASSKLLSLALFLVLLTHANS). N-linked (GlcNAc...) asparagine glycans are attached at residues N91 and N100. C167 and C203 are oxidised to a cystine.

It belongs to the leguminous lectin family. In terms of assembly, monomer.

Functionally, seed storage. This carbohydrate-binding lectin has toxic effects on bean bruchid pests. The chain is Arcelin-5B (ARC5B) from Phaseolus vulgaris (Kidney bean).